We begin with the raw amino-acid sequence, 371 residues long: Cytochrome b (371 aa).

Helical transmembrane passes span Phe24–Leu44, Trp68–Ile89, Trp104–Leu124, and Phe169–Val189. Heme b is bound by residues His74 and His88. Heme b-binding residues include His173 and His187. His192 contributes to the a ubiquinone binding site. 4 helical membrane-spanning segments follow: residues Tyr217–Ala237, Leu279–His299, Leu311–Thr331, and Phe338–Pro357.

The protein belongs to the cytochrome b family. The cytochrome bc1 complex contains 3 respiratory subunits (MT-CYB, CYC1 and UQCRFS1), 2 core proteins (UQCRC1 and UQCRC2) and probably 6 low-molecular weight proteins. Requires heme b as cofactor.

Its subcellular location is the mitochondrion inner membrane. Its function is as follows. Component of the ubiquinol-cytochrome c reductase complex (complex III or cytochrome b-c1 complex) that is part of the mitochondrial respiratory chain. The b-c1 complex mediates electron transfer from ubiquinol to cytochrome c. Contributes to the generation of a proton gradient across the mitochondrial membrane that is then used for ATP synthesis. The sequence is that of Cytochrome b (MT-CYB) from Homoroselaps lacteus (Spotted harlequin snake).